The chain runs to 387 residues: Erythronate-4-phosphate dehydrogenase (387 aa).

Positions 45 and 67 each coordinate substrate. Position 147 (Asp147) interacts with NAD(+). Arg208 is an active-site residue. Residue Asp232 coordinates NAD(+). The active site involves Glu237. Catalysis depends on His254, which acts as the Proton donor. Gly257 lines the NAD(+) pocket. Tyr258 contributes to the substrate binding site.

It belongs to the D-isomer specific 2-hydroxyacid dehydrogenase family. PdxB subfamily. Homodimer.

The protein localises to the cytoplasm. It carries out the reaction 4-phospho-D-erythronate + NAD(+) = (R)-3-hydroxy-2-oxo-4-phosphooxybutanoate + NADH + H(+). It functions in the pathway cofactor biosynthesis; pyridoxine 5'-phosphate biosynthesis; pyridoxine 5'-phosphate from D-erythrose 4-phosphate: step 2/5. Catalyzes the oxidation of erythronate-4-phosphate to 3-hydroxy-2-oxo-4-phosphonooxybutanoate. This Shewanella violacea (strain JCM 10179 / CIP 106290 / LMG 19151 / DSS12) protein is Erythronate-4-phosphate dehydrogenase.